Here is a 193-residue protein sequence, read N- to C-terminus: Holliday junction branch migration complex subunit RuvA (193 aa).

Positions 1 to 64 (MIGRIAGTLI…EDAHLLYGFG (64 aa)) are domain I. A domain II region spans residues 65 to 143 (TASERNTFRE…AELGHVPGTP (79 aa)). The tract at residues 144 to 151 (AVPDSAVD) is flexible linker. The interval 151–193 (DVLNALLALGYSEKEAAAAIKQVPAGTGVSDGIKLALKALSKA) is domain III.

Belongs to the RuvA family. Homotetramer. Forms an RuvA(8)-RuvB(12)-Holliday junction (HJ) complex. HJ DNA is sandwiched between 2 RuvA tetramers; dsDNA enters through RuvA and exits via RuvB. An RuvB hexamer assembles on each DNA strand where it exits the tetramer. Each RuvB hexamer is contacted by two RuvA subunits (via domain III) on 2 adjacent RuvB subunits; this complex drives branch migration. In the full resolvosome a probable DNA-RuvA(4)-RuvB(12)-RuvC(2) complex forms which resolves the HJ.

It is found in the cytoplasm. In terms of biological role, the RuvA-RuvB-RuvC complex processes Holliday junction (HJ) DNA during genetic recombination and DNA repair, while the RuvA-RuvB complex plays an important role in the rescue of blocked DNA replication forks via replication fork reversal (RFR). RuvA specifically binds to HJ cruciform DNA, conferring on it an open structure. The RuvB hexamer acts as an ATP-dependent pump, pulling dsDNA into and through the RuvAB complex. HJ branch migration allows RuvC to scan DNA until it finds its consensus sequence, where it cleaves and resolves the cruciform DNA. The chain is Holliday junction branch migration complex subunit RuvA from Cupriavidus necator (strain ATCC 17699 / DSM 428 / KCTC 22496 / NCIMB 10442 / H16 / Stanier 337) (Ralstonia eutropha).